The primary structure comprises 189 residues: Glycerol-3-phosphate acyltransferase (189 aa).

Transmembrane regions (helical) follow at residues 1-21, 79-99, 113-133, and 151-171; these read MVWL…AILL, QQAW…YFNF, LGLY…VFAF, and LLAW…GVIV.

It belongs to the PlsY family. Probably interacts with PlsX.

Its subcellular location is the cell inner membrane. It catalyses the reaction an acyl phosphate + sn-glycerol 3-phosphate = a 1-acyl-sn-glycero-3-phosphate + phosphate. Its pathway is lipid metabolism; phospholipid metabolism. In terms of biological role, catalyzes the transfer of an acyl group from acyl-phosphate (acyl-PO(4)) to glycerol-3-phosphate (G3P) to form lysophosphatidic acid (LPA). This enzyme utilizes acyl-phosphate as fatty acyl donor, but not acyl-CoA or acyl-ACP. The sequence is that of Glycerol-3-phosphate acyltransferase from Azotobacter vinelandii (strain DJ / ATCC BAA-1303).